The primary structure comprises 229 residues: Flagellar L-ring protein (229 aa).

The first 23 residues, 1-23, serve as a signal peptide directing secretion; sequence MLSRLGARVLYCLAGLALLASGG. Cys24 carries N-palmitoyl cysteine lipidation. The S-diacylglycerol cysteine moiety is linked to residue Cys24.

This sequence belongs to the FlgH family. In terms of assembly, the basal body constitutes a major portion of the flagellar organelle and consists of four rings (L,P,S, and M) mounted on a central rod.

The protein localises to the cell outer membrane. It is found in the bacterial flagellum basal body. Its function is as follows. Assembles around the rod to form the L-ring and probably protects the motor/basal body from shearing forces during rotation. The protein is Flagellar L-ring protein of Cupriavidus pinatubonensis (strain JMP 134 / LMG 1197) (Cupriavidus necator (strain JMP 134)).